Here is a 142-residue protein sequence, read N- to C-terminus: Aspartate 1-decarboxylase (142 aa).

The active-site Schiff-base intermediate with substrate; via pyruvic acid is S25. S25 is modified (pyruvic acid (Ser)). T57 provides a ligand contact to substrate. The active-site Proton donor is the Y58. 73 to 75 (GAA) provides a ligand contact to substrate.

The protein belongs to the PanD family. Heterooctamer of four alpha and four beta subunits. Pyruvate is required as a cofactor. In terms of processing, is synthesized initially as an inactive proenzyme, which is activated by self-cleavage at a specific serine bond to produce a beta-subunit with a hydroxyl group at its C-terminus and an alpha-subunit with a pyruvoyl group at its N-terminus.

Its subcellular location is the cytoplasm. It carries out the reaction L-aspartate + H(+) = beta-alanine + CO2. It functions in the pathway cofactor biosynthesis; (R)-pantothenate biosynthesis; beta-alanine from L-aspartate: step 1/1. Functionally, catalyzes the pyruvoyl-dependent decarboxylation of aspartate to produce beta-alanine. This Arthrobacter sp. (strain FB24) protein is Aspartate 1-decarboxylase.